We begin with the raw amino-acid sequence, 637 residues long: Chaperone protein DnaK (637 aa).

Residue Thr198 is modified to Phosphothreonine; by autocatalysis. Positions 597 to 637 are disordered; it reads MYQQQAEGDAARDAAQDAAKDDVVDAEFTEVDDDKNDKKSA. A compositionally biased stretch (basic and acidic residues) spans 605–619; that stretch reads DAARDAAQDAAKDDV. Acidic residues predominate over residues 620–630; that stretch reads VDAEFTEVDDD.

This sequence belongs to the heat shock protein 70 family.

Its function is as follows. Acts as a chaperone. This chain is Chaperone protein DnaK, found in Afipia carboxidovorans (strain ATCC 49405 / DSM 1227 / KCTC 32145 / OM5) (Oligotropha carboxidovorans).